The sequence spans 310 residues: Olfactory receptor 4D1 (310 aa).

Residues 1–25 lie on the Extracellular side of the membrane; it reads MEPQNTTQVSMFVLLGFSQTQELQK. An N-linked (GlcNAc...) asparagine glycan is attached at Asn5. A helical transmembrane segment spans residues 26-49; that stretch reads FLFLLFLLVYVTTIVGNLLIMVTV. Residues 50–57 lie on the Cytoplasmic side of the membrane; the sequence is TFDCRLHT. Residues 58-79 traverse the membrane as a helical segment; sequence PMYFLLRNLALIDLCYSTVTSP. Residues 80–100 lie on the Extracellular side of the membrane; the sequence is KMLVDFLHETKTISYQGCMAQ. A disulfide bridge connects residues Cys97 and Cys189. A helical membrane pass occupies residues 101-120; the sequence is IFFFHLLGGGTVFFLSVMAY. The Cytoplasmic segment spans residues 121–139; it reads DRYIAISQPLRYVTIMNTQ. Residues 140-158 traverse the membrane as a helical segment; it reads LCVGLVVAAWVGGFVHSIV. Residues 159–195 are Extracellular-facing; the sequence is QLALILPLPFCGPNILDNFYCDVPQVLRLACTDTSLL. The helical transmembrane segment at 196-219 threads the bilayer; it reads EFLMISNSGLLVIIWFLLLLISYT. The Cytoplasmic segment spans residues 220-235; the sequence is VILVMLRSHSGKARRK. The chain crosses the membrane as a helical span at residues 236-258; it reads AASTCTTHIIVVSMIFIPCIYIY. The Extracellular portion of the chain corresponds to 259–269; the sequence is TWPFTPFLMDK. Residues 270 to 289 form a helical membrane-spanning segment; it reads AVSISYTVMTPMLNPMIYTL. At 290–310 the chain is on the cytoplasmic side; the sequence is RNQDMKAAMRRLGKCLVICRE.

It belongs to the G-protein coupled receptor 1 family.

The protein resides in the cell membrane. Functionally, odorant receptor. This Homo sapiens (Human) protein is Olfactory receptor 4D1 (OR4D1).